The chain runs to 392 residues: Outer membrane protein assembly factor BamB (392 aa).

Positions 1 to 19 are cleaved as a signal peptide; it reads MQLRKLLLPGLLSVTLLSG. The N-palmitoyl cysteine moiety is linked to residue C20. C20 is lipidated: S-diacylglycerol cysteine.

The protein belongs to the BamB family. Part of the Bam complex, which is composed of the outer membrane protein BamA, and four lipoproteins BamB, BamC, BamD and BamE. Monomer. Interacts directly with BamA. The Bam complex has the shape of a hat, with the BamA beta-barrel crown in the outer membrane and the periplasmic brim formed by the BamA POTRA domains and the 4 lipoproteins.

It is found in the cell outer membrane. In terms of biological role, part of the outer membrane protein assembly complex (Bam), which is involved in assembly and insertion of beta-barrel proteins into the outer membrane. Nonessential member of the complex, which may orient the flexible periplasmic domain of BamA for interaction with other Bam components, chaperones and nascent outer membrane proteins. Efficient substrate folding and insertion into the outer membrane requires all 5 subunits. A lateral gate may open between the first and last strands of the BamA beta-barrel that allows substrate to insert into the outer membrane; comparison of the structures of complete and nearly complete Bam complexes show there is considerable movement of all 5 proteins. This chain is Outer membrane protein assembly factor BamB, found in Escherichia coli (strain K12).